Here is a 228-residue protein sequence, read N- to C-terminus: Ribosomal RNA small subunit methyltransferase G (228 aa).

S-adenosyl-L-methionine contacts are provided by residues Gly89, Leu94, 140–141, and Arg159; that span reads VE.

Belongs to the methyltransferase superfamily. RNA methyltransferase RsmG family.

The protein localises to the cytoplasm. The catalysed reaction is guanosine(527) in 16S rRNA + S-adenosyl-L-methionine = N(7)-methylguanosine(527) in 16S rRNA + S-adenosyl-L-homocysteine. Specifically methylates the N7 position of guanine in position 527 of 16S rRNA. The sequence is that of Ribosomal RNA small subunit methyltransferase G from Burkholderia ambifaria (strain ATCC BAA-244 / DSM 16087 / CCUG 44356 / LMG 19182 / AMMD) (Burkholderia cepacia (strain AMMD)).